Consider the following 115-residue polypeptide: MATDASYAAFVVDQAGPRLRVRVGRMFGEYALYVDEKVVGFLCDNRTLLKPTDAGREFFENPEIGHPYPGAKDYWVADDVVEEAPRFQDLLRVTAAALPAPKPRKAKTKTPGAQP.

This is an uncharacterized protein from Spirochaeta aurantia.